Reading from the N-terminus, the 494-residue chain is Ubiquinol-cytochrome-c reductase complex core protein I, mitochondrial (494 aa).

Zn(2+) is bound at residue His-70. Glu-73 acts as the Proton acceptor in catalysis. 2 residues coordinate Zn(2+): His-74 and Glu-150.

Belongs to the peptidase M16 family. UQCRC1/QCR1 subfamily. Component of the ubiquinol-cytochrome c oxidoreductase (cytochrome b-c1 complex, complex III, CIII), a multisubunit enzyme composed of 10 subunits. The complex is composed of 3 respiratory subunits cytochrome b, cytochrome c1 and Rieske protein, 2 core protein subunits, and additional low-molecular weight protein subunits. The complex exists as an obligatory dimer and forms supercomplexes (SCs) in the inner mitochondrial membrane with cytochrome c oxidase (complex IV, CIV). Zn(2+) is required as a cofactor. Post-translationally, the N-terminus is blocked.

It is found in the mitochondrion inner membrane. Its function is as follows. Component of the ubiquinol-cytochrome c oxidoreductase, a multisubunit transmembrane complex that is part of the mitochondrial electron transport chain which drives oxidative phosphorylation. The respiratory chain contains 3 multisubunit complexes succinate dehydrogenase (complex II, CII), ubiquinol-cytochrome c oxidoreductase (cytochrome b-c1 complex, complex III, CIII) and cytochrome c oxidase (complex IV, CIV), that cooperate to transfer electrons derived from NADH and succinate to molecular oxygen, creating an electrochemical gradient over the inner membrane that drives transmembrane transport and the ATP synthase. The cytochrome b-c1 complex catalyzes electron transfer from ubiquinol to cytochrome c, linking this redox reaction to translocation of protons across the mitochondrial inner membrane, with protons being carried across the membrane as hydrogens on the quinol. In the process called Q cycle, 2 protons are consumed from the matrix, 4 protons are released into the intermembrane space and 2 electrons are passed to cytochrome c. The protein is Ubiquinol-cytochrome-c reductase complex core protein I, mitochondrial of Euglena gracilis.